The chain runs to 222 residues: Thymidylate kinase (222 aa).

7–14 contributes to the ATP binding site; the sequence is GIDGAGKS.

Belongs to the thymidylate kinase family.

The enzyme catalyses dTMP + ATP = dTDP + ADP. Functionally, phosphorylation of dTMP to form dTDP in both de novo and salvage pathways of dTTP synthesis. This chain is Thymidylate kinase, found in Chlorobium chlorochromatii (strain CaD3).